A 445-amino-acid polypeptide reads, in one-letter code: Glutamate--tRNA ligase 1 (445 aa).

Residues 8-18 carry the 'HIGH' region motif; sequence PSPTGKLHVGN. A 'KMSKS' region motif is present at residues 239–243; that stretch reads KLSKR. K242 is an ATP binding site.

This sequence belongs to the class-I aminoacyl-tRNA synthetase family. Glutamate--tRNA ligase type 1 subfamily. Monomer.

The protein localises to the cytoplasm. The catalysed reaction is tRNA(Glu) + L-glutamate + ATP = L-glutamyl-tRNA(Glu) + AMP + diphosphate. Catalyzes the attachment of glutamate to tRNA(Glu) in a two-step reaction: glutamate is first activated by ATP to form Glu-AMP and then transferred to the acceptor end of tRNA(Glu). This chain is Glutamate--tRNA ligase 1, found in Maricaulis maris (strain MCS10) (Caulobacter maris).